The sequence spans 396 residues: S-adenosylmethionine synthase (396 aa).

H16 contributes to the ATP binding site. D18 is a binding site for Mg(2+). E44 lines the K(+) pocket. L-methionine is bound by residues E57 and Q100. The interval 100 to 110 (QSVDIAQGVDR) is flexible loop. Residues 165-167 (DAK), D240, 246-247 (RK), A263, and K267 each bind ATP. Residue D240 coordinates L-methionine. K271 serves as a coordination point for L-methionine.

This sequence belongs to the AdoMet synthase family. Homotetramer; dimer of dimers. The cofactor is Mg(2+). K(+) serves as cofactor.

The protein localises to the cytoplasm. It carries out the reaction L-methionine + ATP + H2O = S-adenosyl-L-methionine + phosphate + diphosphate. Its pathway is amino-acid biosynthesis; S-adenosyl-L-methionine biosynthesis; S-adenosyl-L-methionine from L-methionine: step 1/1. In terms of biological role, catalyzes the formation of S-adenosylmethionine (AdoMet) from methionine and ATP. The overall synthetic reaction is composed of two sequential steps, AdoMet formation and the subsequent tripolyphosphate hydrolysis which occurs prior to release of AdoMet from the enzyme. The sequence is that of S-adenosylmethionine synthase from Stutzerimonas stutzeri (strain A1501) (Pseudomonas stutzeri).